Reading from the N-terminus, the 770-residue chain is Signal transducer and activator of transcription 3 (770 aa).

Residue alanine 2 is modified to N-acetylalanine. An N6-acetyllysine mark is found at lysine 49 and lysine 87. Residues 150–162 carry the Essential for nuclear import motif; the sequence is DVRKRVQDLEQKM. The 91-residue stretch at 580–670 folds into the SH2 domain; that stretch reads WNEGYIMGFI…DATNILVSPL (91 aa). Lysine 601, lysine 615, and lysine 631 each carry allysine; alternate. 3 positions are modified to N6-acetyllysine; alternate: lysine 601, lysine 615, and lysine 631. Tyrosine 640 carries the post-translational modification Phosphotyrosine; by TYK2. Residue lysine 685 is modified to Allysine; alternate. Position 685 is an N6-acetyllysine; alternate (lysine 685). Position 705 is a phosphotyrosine; by FER and PTK6 (tyrosine 705). Lysine 707 bears the N6-acetyllysine mark. Threonine 714 bears the Phosphothreonine mark. Serine 727 carries the post-translational modification Phosphoserine; by DYRK2, NLK, NEK6, IRAK1, RPS6KA5, ZIPK/DAPK3 and PKC/PRKCE.

This sequence belongs to the transcription factor STAT family. In terms of assembly, forms a homodimer or a heterodimer with a related family member (at least STAT1). Component of a promoter-binding complex composed of STAT3, NFATC3 and NFATC4; complex formation is enhanced by calcineurin. Interacts with IL31RA, NCOA1, PELP1, SIPAR, SOCS7, STATIP1 and TMF1. Interacts with IL23R in presence of IL23. Interacts (via SH2 domain) with NLK. Interacts with ARL2BP; the interaction is enhanced by LIF and JAK1 expression. Interacts with KPNA4 and KPNA5; KPNA4 may be the primary mediator of nuclear import. Interacts with CAV2; the interaction is increased on insulin-induced tyrosine phosphorylation of CAV2 and leads to STAT3 activation. Interacts with ARL2BP; interaction is enhanced with ARL2. Interacts with NEK6. Binds to CDK9 when activated and nuclear. Interacts with BMX. Interacts with ZIPK/DAPK3. Interacts with PIAS3; the interaction occurs on stimulation by IL6, CNTF or OSM and inhibits the DNA binding activity of STAT3. In prostate cancer cells, interacts with PRKCE and promotes DNA binding activity of STAT3. Interacts with STMN3, antagonizing its microtubule-destabilizing activity. Interacts with the 'Lys-129' acetylated form of BIRC5/survivin. Interacts with FER. Interacts (via SH2 domain) with EIF2AK2/PKR (via the kinase catalytic domain). Interacts with FGFR4. Interacts with INPP5F; the interaction is independent of STAT3 Tyr-705 phosphorylation status. Interacts with OCIAD1 and OCIAD2. Interacts (unphosphorylated or phosphorylated at Ser-727) with PHB1. Interacts and may form heterodimers with NHLH1. Found in a complex with SLC39A6, SLC39A10 and with the 'Ser-727' phosphorylated form of STAT3 throughout mitosis. Interacts (when acetylated) with EP300 (via bromo domain); interaction takes place following STAT3 acetylation by EP300 and promotes enhanceosome assembly. Interacts (when acetylated) with BRD2 (via bromo domain); interaction promotes STAT3 recruitment to chromatin and T-helper Th17 cell differentiation. Interacts with FAM220A/SIPAR; the interaction occurs in both the nucleus and the cytoplasm, is enhanced by IL6 and promotes STAT3 dephosphorylation. Interacts in both unphosphorylated and phosphorylated forms with FAM220A but interacts preferentially in the phosphorylated form in the nucleus. Interacts with PTPN2; the interaction is promoted by FAM220A and leads to STAT3 dephosphorylation which negatively regulates STAT3 transcriptional activator activity. Post-translationally, activated through tyrosine phosphorylation by BMX. Tyrosine phosphorylated in response to IL-6, IL-11, CNTF, LIF, CSF-1, EGF, PDGF, IFN-alpha and OSM. Tyrosine phosphorylated in response to constitutively activated FGFR1, FGFR2, FGFR3 and FGFR4. Phosphorylated on serine upon DNA damage, probably by ATM or ATR. Serine phosphorylation is important for the formation of stable DNA-binding STAT3 homodimers and maximal transcriptional activity. ARL2BP may participate in keeping the phosphorylated state of STAT3 within the nucleus. Tyrosine phosphorylated upon stimulation with EGF. Upon LPS challenge, phosphorylated within the nucleus by IRAK1. Phosphorylated on Ser-727 by RPS6KA5. Dephosphorylation on tyrosine residues by PTPN2 negatively regulates IL6/interleukin-6 signaling. Phosphorylation at Tyr-705 by FER, isoform M2 of PKM (PKM2) or PTK6 leads to an increase of its transcriptional activity. Phosphorylation at Tyr-705 is increased in the presence of calcineurin. Phosphorylation at Tyr-640 by TYK2 negatively regulates transcriptional activity. In terms of processing, acetylated on lysine residues by EP300/p300, promoting its activation. Acetylation at Lys-49 and Lys-87 by EP300/p300 promotes its activation. Acetylation at Lys-87 by EP300/p300 promotes its association with BRD2 and recruitment to chromatin. Deacetylated at Lys-49 and Lys-87 by HDAC1. Acetylation at Lys-685 by EP300/p300 promotes its homodimerization and activation. Deacetylated at Lys-685 by HDAC3. Acetylated on lysine residues by CREBBP. Deacetylation by LOXL3 leads to disrupt STAT3 dimerization and inhibit STAT3 transcription activity. Oxidation of lysine residues to allysine on STAT3 preferentially takes place on lysine residues that are acetylated. Some lysine residues are oxidized to allysine by LOXL3, leading to disrupt STAT3 dimerization and inhibit STAT3 transcription activity. Oxidation of lysine residues to allysine on STAT3 preferentially takes place on lysine residues that are acetylated.

Its subcellular location is the cytoplasm. It localises to the nucleus. Signal transducer and transcription activator that mediates cellular responses to interleukins, KITLG/SCF, LEP and other growth factors. Once activated, recruits coactivators, such as NCOA1 or MED1, to the promoter region of the target gene. May mediate cellular responses to activated FGFR1, FGFR2, FGFR3 and FGFR4. Upon activation of IL6ST/gp130 signaling by interleukin-6 (IL6), binds to the IL6-responsive elements identified in the promoters of various acute-phase protein genes. Activated by IL31 through IL31RA. Acts as a regulator of inflammatory response by regulating differentiation of naive CD4(+) T-cells into T-helper Th17 or regulatory T-cells (Treg): acetylation promotes its transcription activity and cell differentiation while deacetylation and oxidation of lysine residues by LOXL3 inhibits differentiation. Involved in cell cycle regulation by inducing the expression of key genes for the progression from G1 to S phase, such as CCND1. Mediates the effects of LEP on melanocortin production, body energy homeostasis and lactation. May play an apoptotic role by transctivating BIRC5 expression under LEP activation. Cytoplasmic STAT3 represses macroautophagy by inhibiting EIF2AK2/PKR activity. Plays a crucial role in basal beta cell functions, such as regulation of insulin secretion. Following JAK/STAT signaling activation and as part of a complex with NFATC3 and NFATC4, binds to the alpha-beta E4 promoter region of CRYAB and activates transcription in cardiomyocytes. Plays an important role in host defense in methicillin-resistant S.aureus lung infection by regulating the expression of the antimicrobial lectin REG3G. This is Signal transducer and activator of transcription 3 (STAT3) from Bos taurus (Bovine).